Here is a 136-residue protein sequence, read N- to C-terminus: Small ribosomal subunit protein uS19 (136 aa).

It belongs to the universal ribosomal protein uS19 family.

In terms of biological role, protein S19 forms a complex with S13 that binds strongly to the 16S ribosomal RNA. The sequence is that of Small ribosomal subunit protein uS19 from Methanocorpusculum labreanum (strain ATCC 43576 / DSM 4855 / Z).